The primary structure comprises 406 residues: Argininosuccinate synthase (406 aa).

ATP is bound by residues 11-19 and Ala38; that span reads AYSGGLDTS. 2 residues coordinate L-citrulline: Tyr91 and Ser96. Residue Gly121 participates in ATP binding. L-aspartate contacts are provided by Thr123, Asn127, and Asp128. Asn127 is an L-citrulline binding site. L-citrulline contacts are provided by Arg131, Ser181, Ser190, Glu266, and Tyr278.

This sequence belongs to the argininosuccinate synthase family. Type 1 subfamily. Homotetramer.

It is found in the cytoplasm. The catalysed reaction is L-citrulline + L-aspartate + ATP = 2-(N(omega)-L-arginino)succinate + AMP + diphosphate + H(+). Its pathway is amino-acid biosynthesis; L-arginine biosynthesis; L-arginine from L-ornithine and carbamoyl phosphate: step 2/3. The sequence is that of Argininosuccinate synthase from Campylobacter lari (strain RM2100 / D67 / ATCC BAA-1060).